Reading from the N-terminus, the 209-residue chain is Uridine kinase (209 aa).

Position 12–19 (12–19) interacts with ATP; the sequence is GGSGSGKT.

The protein belongs to the uridine kinase family.

Its subcellular location is the cytoplasm. It catalyses the reaction uridine + ATP = UMP + ADP + H(+). It carries out the reaction cytidine + ATP = CMP + ADP + H(+). The protein operates within pyrimidine metabolism; CTP biosynthesis via salvage pathway; CTP from cytidine: step 1/3. Its pathway is pyrimidine metabolism; UMP biosynthesis via salvage pathway; UMP from uridine: step 1/1. The protein is Uridine kinase of Listeria innocua serovar 6a (strain ATCC BAA-680 / CLIP 11262).